A 302-amino-acid polypeptide reads, in one-letter code: MEVTSQERSVCAVLGDYHIPDEAAVLREYKGISVTDPRHHPSLSKAKTCLDRSIYMLKICVALFANRQREMDILQAVTDNVRYFLGRVRDAAGGCDEALRDLIRETARYSPHISPRIGERLLAVLRVRYPGYAPSGGPWEGLMEDSIPVWCSHHMTQLRDEERVLECFVERSGTVYSLSKFCSLASELFYEDSLWHRLPDPEFIRPYNLAVFWVGVMKKFESVLAKKLVDDHLTCYTTVAKYDIAAACEAVRRCGERRASGVTLELVDWLRWKLRDFGVDSNDSHASEIISVLQILRGNHLV.

This sequence belongs to the herpesviridae BBRF1 family.

This is an uncharacterized protein from Equine herpesvirus 2 (strain 86/87) (EHV-2).